The chain runs to 108 residues: Zinc metalloproteinase/disintegrin (108 aa).

Residues 1 to 19 (NEYQTYLTDRNPQCILNEP) enclose the Peptidase M12B domain. A propeptide spanning residues 20 to 35 (LRTDTVSTPVSGNELL) is cleaved from the precursor. The Disintegrin domain occupies 27-108 (TPVSGNELLE…ADCPRNGFYG (82 aa)). Intrachain disulfides connect Cys-41–Cys-56, Cys-43–Cys-51, Cys-50–Cys-73, Cys-64–Cys-70, Cys-69–Cys-94, and Cys-82–Cys-101. The Cell attachment site; atypical (KGD) signature appears at 86–88 (KGD).

The protein belongs to the venom metalloproteinase (M12B) family. P-II subfamily. P-IIa sub-subfamily. Monomeric (disintegrin). The cofactor is Zn(2+). Expressed by the venom gland.

Its subcellular location is the secreted. Its function is as follows. Impairs hemostasis in the envenomed animal. In terms of biological role, inhibits platelet aggregation induced by ADP, thrombin, platelet-activating factor and collagen. Acts by inhibiting fibrinogen interaction with platelet receptors GPIIb/GPIIIa (ITGA2B/ITGB3). The sequence is that of Zinc metalloproteinase/disintegrin from Gloydius brevicauda (Korean slamosa snake).